The primary structure comprises 66 residues: Large ribosomal subunit protein bL31 (66 aa).

4 residues coordinate Zn(2+): cysteine 16, cysteine 18, cysteine 36, and cysteine 39.

The protein belongs to the bacterial ribosomal protein bL31 family. Type A subfamily. In terms of assembly, part of the 50S ribosomal subunit. Zn(2+) is required as a cofactor.

In terms of biological role, binds the 23S rRNA. The chain is Large ribosomal subunit protein bL31 from Priestia megaterium (Bacillus megaterium).